Reading from the N-terminus, the 213-residue chain is Pyridoxine/pyridoxamine 5'-phosphate oxidase (213 aa).

Substrate-binding positions include 8 to 11 and Lys-66; that span reads RQEY. Residues 61–66, 76–77, Arg-82, Lys-83, and Gln-105 each bind FMN; these read RTVLLK and YT. Tyr-123, Arg-127, and Ser-131 together coordinate substrate. Residues 140–141 and Trp-185 each bind FMN; that span reads QS. 191 to 193 is a substrate binding site; that stretch reads RLH. Position 195 (Arg-195) interacts with FMN.

This sequence belongs to the pyridoxamine 5'-phosphate oxidase family. As to quaternary structure, homodimer. Requires FMN as cofactor.

It carries out the reaction pyridoxamine 5'-phosphate + O2 + H2O = pyridoxal 5'-phosphate + H2O2 + NH4(+). The enzyme catalyses pyridoxine 5'-phosphate + O2 = pyridoxal 5'-phosphate + H2O2. It participates in cofactor metabolism; pyridoxal 5'-phosphate salvage; pyridoxal 5'-phosphate from pyridoxamine 5'-phosphate: step 1/1. It functions in the pathway cofactor metabolism; pyridoxal 5'-phosphate salvage; pyridoxal 5'-phosphate from pyridoxine 5'-phosphate: step 1/1. Catalyzes the oxidation of either pyridoxine 5'-phosphate (PNP) or pyridoxamine 5'-phosphate (PMP) into pyridoxal 5'-phosphate (PLP). This Bacteroides thetaiotaomicron (strain ATCC 29148 / DSM 2079 / JCM 5827 / CCUG 10774 / NCTC 10582 / VPI-5482 / E50) protein is Pyridoxine/pyridoxamine 5'-phosphate oxidase.